We begin with the raw amino-acid sequence, 319 residues long: Transaldolase (319 aa).

Lysine 125 acts as the Schiff-base intermediate with substrate in catalysis.

This sequence belongs to the transaldolase family. Type 1 subfamily. As to quaternary structure, homodimer.

The protein localises to the cytoplasm. The enzyme catalyses D-sedoheptulose 7-phosphate + D-glyceraldehyde 3-phosphate = D-erythrose 4-phosphate + beta-D-fructose 6-phosphate. Its pathway is carbohydrate degradation; pentose phosphate pathway; D-glyceraldehyde 3-phosphate and beta-D-fructose 6-phosphate from D-ribose 5-phosphate and D-xylulose 5-phosphate (non-oxidative stage): step 2/3. Transaldolase is important for the balance of metabolites in the pentose-phosphate pathway. The chain is Transaldolase from Ralstonia pickettii (strain 12J).